Reading from the N-terminus, the 272-residue chain is HMP-PP phosphatase (272 aa).

Asp-8 (nucleophile) is an active-site residue. 3 residues coordinate Mg(2+): Asp-8, Asp-10, and Asp-212.

The protein belongs to the HAD-like hydrolase superfamily. Cof family. Mg(2+) serves as cofactor.

It carries out the reaction 4-amino-2-methyl-5-(diphosphooxymethyl)pyrimidine + H2O = 4-amino-2-methyl-5-(phosphooxymethyl)pyrimidine + phosphate + H(+). Catalyzes the hydrolysis of 4-amino-2-methyl-5-hydroxymethylpyrimidine pyrophosphate (HMP-PP) to 4-amino-2-methyl-5-hydroxymethylpyrimidine phosphate (HMP-P). The protein is HMP-PP phosphatase of Cronobacter sakazakii (strain ATCC BAA-894) (Enterobacter sakazakii).